Consider the following 292-residue polypeptide: Lipoyl synthase (292 aa).

The [4Fe-4S] cluster site is built by C34, C39, C45, C60, C64, C67, and S273. One can recognise a Radical SAM core domain in the interval 46-262; it reads WNKKHATVMI…KYVAYSKGFL (217 aa).

This sequence belongs to the radical SAM superfamily. Lipoyl synthase family. It depends on [4Fe-4S] cluster as a cofactor.

The protein resides in the cytoplasm. The catalysed reaction is [[Fe-S] cluster scaffold protein carrying a second [4Fe-4S](2+) cluster] + N(6)-octanoyl-L-lysyl-[protein] + 2 oxidized [2Fe-2S]-[ferredoxin] + 2 S-adenosyl-L-methionine + 4 H(+) = [[Fe-S] cluster scaffold protein] + N(6)-[(R)-dihydrolipoyl]-L-lysyl-[protein] + 4 Fe(3+) + 2 hydrogen sulfide + 2 5'-deoxyadenosine + 2 L-methionine + 2 reduced [2Fe-2S]-[ferredoxin]. Its pathway is protein modification; protein lipoylation via endogenous pathway; protein N(6)-(lipoyl)lysine from octanoyl-[acyl-carrier-protein]: step 2/2. Its function is as follows. Catalyzes the radical-mediated insertion of two sulfur atoms into the C-6 and C-8 positions of the octanoyl moiety bound to the lipoyl domains of lipoate-dependent enzymes, thereby converting the octanoylated domains into lipoylated derivatives. The chain is Lipoyl synthase from Ehrlichia ruminantium (strain Welgevonden).